Reading from the N-terminus, the 142-residue chain is NCT transcriptional regulatory complex subunit B (142 aa).

Belongs to the NC2 beta/DR1 family. As to quaternary structure, forms the NCT transcriptional regulatory complex with nctA and mot1.

The protein localises to the nucleus. Its function is as follows. Part of the NCT transcriptional regulatory complex that acts as a key regulator of ergosterol biosynthesis and the azole exporter cdr1B. The NCT complex binds the promoters of genes linked to azole susceptibility, and especially represses the expression of cdr1B transporter. The protein is NCT transcriptional regulatory complex subunit B of Aspergillus fumigatus (strain CBS 144.89 / FGSC A1163 / CEA10) (Neosartorya fumigata).